The primary structure comprises 459 residues: Ammonium transporter Rh type B (459 aa).

Residues 1–10 (MAESTNLRLR) lie on the Cytoplasmic side of the membrane. A helical transmembrane segment spans residues 11 to 31 (LPLICIILEVILIILFGVLVE). Residues 32–58 (YNDDTDAKKWNKNNSTDPATNEFYYRY) lie on the Extracellular side of the membrane. Residue N45 is glycosylated (N-linked (GlcNAc...) asparagine). The chain crosses the membrane as a helical span at residues 59–79 (PSFQDVHVMIFVGFGFLMTFL). Residues 80 to 87 (QRYGFSSM) lie on the Cytoplasmic side of the membrane. The chain crosses the membrane as a helical span at residues 88 to 108 (GFNFLIAAFSLQWATLMQGFF). At 109 to 121 (HGMHHGKIHVGVT) the chain is on the extracellular side. A helical membrane pass occupies residues 122-142 (SMINADFCTGAVLISFGAVLG). Topologically, residues 143–149 (KTSPVQL) are cytoplasmic. A helical membrane pass occupies residues 150-170 (LVMAILEVTLFAVNEYILLSI). The Extracellular portion of the chain corresponds to 171 to 176 (LGANDA). The chain crosses the membrane as a helical span at residues 177-197 (GGSMTIHTFGAYFGLMVTRIL). At 198–216 (HRPNLDKSKHKNSSVYHSD) the chain is on the cytoplasmic side. The chain crosses the membrane as a helical span at residues 217–237 (LFAMIGTIFLWMFWPSFNSAI). Topologically, residues 238–248 (TQYGDPQHRTA) are extracellular. Residues 249 to 269 (ANTYYSLAACTLATFGFSSLV) form a helical membrane-spanning segment. Residues 270–274 (NPEGK) lie on the Cytoplasmic side of the membrane. The chain crosses the membrane as a helical span at residues 275 to 295 (LDMVHIQNAALAGGVAVGTAG). E296 is a topological domain (extracellular). A helical membrane pass occupies residues 297–317 (MMLTPFGSMIVGFLAGTISVL). Residues 318-340 (GYKYLTPFMESKLKIQDTCGIHN) are Cytoplasmic-facing. Residues 341-361 (LHGMPGILGAIVGAVTAALAS) form a helical membrane-spanning segment. At 362-392 (RDVYGNGLDKVFLEAADNSQWSAQTKGGFQA) the chain is on the extracellular side. Residues 393 to 413 (ISLAVTLGIALIGGLITGFLL) form a helical membrane-spanning segment. Residues 414–459 (KLPIYGTPPDTQCFEDAVYWEVPGEEEDHHELNEVSTQNEVEKLNS) lie on the Cytoplasmic side of the membrane. The tract at residues 440–459 (EDHHELNEVSTQNEVEKLNS) is disordered.

It belongs to the ammonium transporter (TC 2.A.49) family. Rh subfamily.

It localises to the basolateral cell membrane. It is found in the cytoplasmic vesicle membrane. Functionally, functions as an ammonia transporter. May play a role in the elimination of ammonia in the gill. This Danio rerio (Zebrafish) protein is Ammonium transporter Rh type B (rhbg).